The primary structure comprises 1132 residues: Ubiquitin-associated protein 2 (1132 aa).

The segment at Met-1 to Lys-29 is disordered. Residues Asp-8–Pro-17 show a composition bias toward basic and acidic residues. The UBA domain maps to Lys-48–Gly-92. 10 disordered regions span residues Asp-95–Ser-202, Gly-221–Lys-248, Asn-331–Ser-351, Leu-380–Ser-479, Thr-602–Leu-679, Pro-713–Thr-749, Pro-875–Gly-919, Gly-996–Tyr-1033, Asp-1040–Gly-1059, and Pro-1087–Asn-1132. A compositionally biased stretch (basic and acidic residues) spans Phe-109–Arg-130. Residue Arg-166 is modified to Omega-N-methylarginine. Residues Lys-168 to Gly-182 show a composition bias toward basic residues. Polar residues-rich tracts occupy residues His-233–Ser-244 and Asn-331–Asn-340. Positions Ser-341 to Ser-351 are enriched in low complexity. The segment covering Ser-392–Ala-404 has biased composition (polar residues). Residues Ser-433 and Ser-440 each carry the phosphoserine modification. Composition is skewed to low complexity over residues Leu-436–Gln-448 and Thr-602–Tyr-618. Residues Asp-619–Gln-630 are compositionally biased toward polar residues. Ser-631 bears the Phosphoserine mark. Residues Ser-631–Ala-644 are compositionally biased toward low complexity. Residues Ser-652–Val-662 show a composition bias toward polar residues. The span at Pro-713 to Ser-722 shows a compositional bias: low complexity. Polar residues predominate over residues Gly-723–Thr-742. The span at Pro-897 to Pro-914 shows a compositional bias: low complexity. A compositionally biased stretch (low complexity) spans Pro-1101–Pro-1115. Over residues Lys-1116–Asn-1132 the composition is skewed to polar residues.

As to quaternary structure, may interact with ANXA2.

It is found in the nucleus. The protein localises to the chromosome. The protein resides in the cytoplasm. Its function is as follows. Recruits the ubiquitination machinery to RNA polymerase II for polyubiquitination, removal and degradation, when the transcription-coupled nucleotide excision repair (TC-NER) machinery fails to resolve DNA damage. May promote the degradation of ANXA2. The protein is Ubiquitin-associated protein 2 of Mus musculus (Mouse).